A 132-amino-acid chain; its full sequence is Histone H2A.1 (132 aa).

Residue Ser2 is modified to N-acetylserine. Lys5 and Lys8 each carry N6-acetyllysine. An N6-succinyllysine mark is found at Lys14 and Lys22. An N5-methylglutamine modification is found at Gln106. The residue at position 120 (Lys120) is an N6-malonyllysine; alternate. Lys127 is covalently cross-linked (Glycyl lysine isopeptide (Lys-Gly) (interchain with G-Cter in SUMO)). Ser129 is subject to Phosphoserine. Residues 129-130 (SQ) carry the [ST]-Q motif motif.

The protein belongs to the histone H2A family. As to quaternary structure, the nucleosome is a histone octamer containing two molecules each of H2A, H2B, H3 and H4 assembled in one H3-H4 heterotetramer and two H2A-H2B heterodimers. The octamer wraps approximately 147 bp of DNA. In terms of processing, phosphorylated to form H2AS128ph (gamma-H2A) in response to DNA double-strand breaks (DSBs) generated by exogenous genotoxic agents and by stalled replication forks. Phosphorylation is dependent on the DNA damage checkpoint kinases MEC1/ATR and TEL1/ATM, spreads on either side of a detected DSB site and may mark the surrounding chromatin for recruitment of proteins required for DNA damage signaling and repair. Gamma-H2A interacts with ARP4, a shared component of the NuA4 histone acetyltransferase complex and the INO80 and SWR1 chromatin remodeling complexes, and serves to recruit first NuA4, mediating histone H4 acetylation, and subsequently the INO80/SWR1 complexes, facilitating DNA resection, to DSB sites. Gamma-H2A is required for sequestering cohesin around the break site, which is important for efficient post-replicative double-strand break repair by homologous recombination, holding the damaged chromatid close to its undamaged sister template. Gamma-H2A is removed from the DNA prior to the strand invasion-primer extension step of the repair process and subsequently dephosphorylated by PPH3, a component of the histone H2A phosphatase complex (HTP-C). Dephosphorylation is necessary for efficient recovery from the DNA damage checkpoint. Post-translationally, N-acetylated by NAT4. Acetylated by ESA1, a component of the NuA4 histone acetyltransferase (HAT) complex, to form H2AK4ac and H2AK7ac. In terms of processing, glutamine methylation at Gln-106 (H2AQ105me) by NOP1 is specifically dedicated to polymerase I. It is present at 35S ribosomal DNA locus and impairs binding of the FACT complex. Post-translationally, sumoylated to from H2AK126su. May lead to transcriptional repression.

The protein localises to the nucleus. The protein resides in the chromosome. Its function is as follows. Core component of nucleosome which plays a central role in DNA double strand break (DSB) repair. Nucleosomes wrap and compact DNA into chromatin, limiting DNA accessibility to the cellular machineries which require DNA as a template. Histones thereby play a central role in transcription regulation, DNA repair, DNA replication and chromosomal stability. DNA accessibility is regulated via a complex set of post-translational modifications of histones, also called histone code, and nucleosome remodeling. The protein is Histone H2A.1 (HTA1) of Saccharomyces cerevisiae (strain ATCC 204508 / S288c) (Baker's yeast).